The primary structure comprises 191 residues: Ion-translocating oxidoreductase complex subunit B (191 aa).

The hydrophobic stretch occupies residues 1–26; sequence MSSLWIAIAAVSAIALVSGLILGFAA. Positions 32–90 constitute a 4Fe-4S domain; that stretch reads EADPIVERIDALLPQSQCGQCGYPGCRPYAEAVANGEKINRCAPGGEAVMRNIAALLAV. Residues Cys-49, Cys-52, Cys-57, Cys-73, Cys-116, Cys-119, Cys-122, Cys-126, Cys-146, Cys-149, Cys-152, and Cys-156 each coordinate [4Fe-4S] cluster. 2 4Fe-4S ferredoxin-type domains span residues 107–136 and 137–166; these read QVAL…GATR and ALHT…LVPV.

This sequence belongs to the 4Fe4S bacterial-type ferredoxin family. RnfB subfamily. The complex is composed of six subunits: RnfA, RnfB, RnfC, RnfD, RnfE and RnfG. The cofactor is [4Fe-4S] cluster.

The protein resides in the cell inner membrane. Its function is as follows. Part of a membrane-bound complex that couples electron transfer with translocation of ions across the membrane. The polypeptide is Ion-translocating oxidoreductase complex subunit B (Edwardsiella ictaluri (strain 93-146)).